A 420-amino-acid polypeptide reads, in one-letter code: UDP-N-acetylglucosamine 1-carboxyvinyltransferase (420 aa).

Phosphoenolpyruvate is bound at residue 22-23; it reads KN. Arg95 provides a ligand contact to UDP-N-acetyl-alpha-D-glucosamine. The Proton donor role is filled by Cys119. Position 119 is a 2-(S-cysteinyl)pyruvic acid O-phosphothioketal (Cys119). UDP-N-acetyl-alpha-D-glucosamine-binding positions include 124 to 128, Asp307, and Ile329; that span reads RPIDQ.

It belongs to the EPSP synthase family. MurA subfamily.

The protein resides in the cytoplasm. It carries out the reaction phosphoenolpyruvate + UDP-N-acetyl-alpha-D-glucosamine = UDP-N-acetyl-3-O-(1-carboxyvinyl)-alpha-D-glucosamine + phosphate. The protein operates within cell wall biogenesis; peptidoglycan biosynthesis. Its function is as follows. Cell wall formation. Adds enolpyruvyl to UDP-N-acetylglucosamine. The sequence is that of UDP-N-acetylglucosamine 1-carboxyvinyltransferase from Myxococcus xanthus (strain DK1622).